A 360-amino-acid polypeptide reads, in one-letter code: Heat-inducible transcription repressor HrcA (360 aa).

The protein belongs to the HrcA family.

Negative regulator of class I heat shock genes (grpE-dnaK-dnaJ and groELS operons). Prevents heat-shock induction of these operons. The protein is Heat-inducible transcription repressor HrcA of Streptococcus thermophilus (strain CNRZ 1066).